We begin with the raw amino-acid sequence, 393 residues long: S-adenosylmethionine synthase (393 aa).

Mg(2+) is bound at residue Glu-9. His-15 is an ATP binding site. Mg(2+) is bound at residue Asp-17. Residue Glu-43 coordinates K(+). Positions 56 and 99 each coordinate L-methionine. Residues Asp-167 to Lys-169, Ser-235 to Phe-238, Asp-246, Arg-252 to Lys-253, Ala-269, Lys-273, and Lys-277 each bind ATP. Position 246 (Asp-246) interacts with L-methionine. Lys-277 is a binding site for L-methionine.

It belongs to the AdoMet synthase family. As to quaternary structure, homotetramer; dimer of dimers. Mn(2+) serves as cofactor. The cofactor is Mg(2+). It depends on Co(2+) as a cofactor. Requires K(+) as cofactor.

The protein resides in the cytoplasm. The enzyme catalyses L-methionine + ATP + H2O = S-adenosyl-L-methionine + phosphate + diphosphate. Its pathway is amino-acid biosynthesis; S-adenosyl-L-methionine biosynthesis; S-adenosyl-L-methionine from L-methionine: step 1/1. Increased activity in the presence of 25 percent acetonitrile, methanol or dimethylformamide. Catalyzes the formation of S-adenosylmethionine from methionine and ATP. In Acacia koa (Koa tree), this protein is S-adenosylmethionine synthase.